Consider the following 263-residue polypeptide: Small ribosomal subunit protein eS4 (263 aa).

The S4 RNA-binding domain maps to leucine 42–aspartate 104.

The protein belongs to the eukaryotic ribosomal protein eS4 family.

This Spodoptera frugiperda (Fall armyworm) protein is Small ribosomal subunit protein eS4 (RpS4).